Here is a 35-residue protein sequence, read N- to C-terminus: Cupiennin-2a (35 aa).

A Lysine amide modification is found at Lys-35.

Expressed by the venom gland.

It localises to the secreted. This Cupiennius salei (American wandering spider) protein is Cupiennin-2a.